The sequence spans 219 residues: Leucyl/phenylalanyl-tRNA--protein transferase (219 aa).

The protein belongs to the L/F-transferase family.

Its subcellular location is the cytoplasm. It catalyses the reaction N-terminal L-lysyl-[protein] + L-leucyl-tRNA(Leu) = N-terminal L-leucyl-L-lysyl-[protein] + tRNA(Leu) + H(+). The catalysed reaction is N-terminal L-arginyl-[protein] + L-leucyl-tRNA(Leu) = N-terminal L-leucyl-L-arginyl-[protein] + tRNA(Leu) + H(+). It carries out the reaction L-phenylalanyl-tRNA(Phe) + an N-terminal L-alpha-aminoacyl-[protein] = an N-terminal L-phenylalanyl-L-alpha-aminoacyl-[protein] + tRNA(Phe). In terms of biological role, functions in the N-end rule pathway of protein degradation where it conjugates Leu, Phe and, less efficiently, Met from aminoacyl-tRNAs to the N-termini of proteins containing an N-terminal arginine or lysine. The sequence is that of Leucyl/phenylalanyl-tRNA--protein transferase from Leptospira interrogans serogroup Icterohaemorrhagiae serovar copenhageni (strain Fiocruz L1-130).